The following is a 204-amino-acid chain: N-(5'-phosphoribosyl)anthranilate isomerase (204 aa).

This sequence belongs to the TrpF family.

It catalyses the reaction N-(5-phospho-beta-D-ribosyl)anthranilate = 1-(2-carboxyphenylamino)-1-deoxy-D-ribulose 5-phosphate. Its pathway is amino-acid biosynthesis; L-tryptophan biosynthesis; L-tryptophan from chorismate: step 3/5. This is N-(5'-phosphoribosyl)anthranilate isomerase from Bacillus cereus (strain G9842).